Consider the following 402-residue polypeptide: CinA-like protein (402 aa).

Belongs to the CinA family.

This is CinA-like protein from Deinococcus deserti (strain DSM 17065 / CIP 109153 / LMG 22923 / VCD115).